Here is a 348-residue protein sequence, read N- to C-terminus: L-threonine 3-dehydrogenase (348 aa).

Residue Cys42 coordinates Zn(2+). Active-site charge relay system residues include Thr44 and His47. Residues His67, Glu68, Cys97, Cys100, Cys103, and Cys111 each contribute to the Zn(2+) site. Residues Leu179, Glu199, Arg204, 266–268 (LGL), and 291–292 (IT) each bind NAD(+).

The protein belongs to the zinc-containing alcohol dehydrogenase family. Homodimer. Homotetramer; dimer of dimers. The cofactor is Zn(2+).

Its subcellular location is the cytoplasm. It catalyses the reaction L-threonine + NAD(+) = (2S)-2-amino-3-oxobutanoate + NADH + H(+). It functions in the pathway amino-acid degradation; L-threonine degradation via oxydo-reductase pathway; glycine from L-threonine: step 1/2. With respect to regulation, is totally inhibited by EDTA in vitro. Functionally, catalyzes the NAD(+)-dependent oxidation of L-threonine to 2-amino-3-ketobutyrate. Is much less efficient when using NADP(+) instead of NAD(+). To a lesser extent, also catalyzes the oxidation of L-serine and DL-threo-3-phenylserine, but not that of L-allo-threonine, D-threonine and D-allo-threonine and many other L-amino acids. This is L-threonine 3-dehydrogenase from Pyrococcus horikoshii (strain ATCC 700860 / DSM 12428 / JCM 9974 / NBRC 100139 / OT-3).